The sequence spans 365 residues: Protein RecA (365 aa).

Residue 76 to 83 coordinates ATP; it reads GPESSGKT. A disordered region spans residues 346 to 365; sequence DVPGSERDGDEDAGDMEASA. Positions 353–365 are enriched in acidic residues; it reads DGDEDAGDMEASA.

It belongs to the RecA family.

Its subcellular location is the cytoplasm. In terms of biological role, can catalyze the hydrolysis of ATP in the presence of single-stranded DNA, the ATP-dependent uptake of single-stranded DNA by duplex DNA, and the ATP-dependent hybridization of homologous single-stranded DNAs. It interacts with LexA causing its activation and leading to its autocatalytic cleavage. The chain is Protein RecA from Parvibaculum lavamentivorans (strain DS-1 / DSM 13023 / NCIMB 13966).